Here is a 2548-residue protein sequence, read N- to C-terminus: Variant-silencing SET domain-containing protein (2548 aa).

The span at 37-48 shows a compositional bias: acidic residues; sequence IDDDDDDDNDNN. Disordered stretches follow at residues 37–61, 336–379, and 585–629; these read IDDDDDDDNDNNEEPKEMNINKTNN, GDPK…DDDN, and SVDR…NTQT. The span at 336 to 357 shows a compositional bias: basic and acidic residues; the sequence is GDPKKRIERNKQEIEDHRREQD. The segment covering 358-378 has biased composition (acidic residues); the sequence is GENDQEEDNYDDYDDEDDDDD. Over residues 602-616 the composition is skewed to low complexity; it reads NGSNNNNSSSNNNNN. Residues 617–629 show a composition bias toward polar residues; the sequence is ITHITNDCDNTQT. The PHD-type 1 zinc finger occupies 787-846; that stretch reads FYLCEFCEQNIFDMNNMIKKDKAKECMYRCNISCGRTFHKACVCYIKNNDNYICFFCLYD. Positions 929-944 are enriched in basic residues; that stretch reads IKRRHIYRKRRRRGPR. Disordered regions lie at residues 929 to 1054, 1546 to 1575, 1713 to 1732, and 1772 to 1822; these read IKRR…CDEN, EKNTKNKLCNNDNNNNNNNKGKNTKYNTLD, EQGSINNAKHNEQGSINNAK, and INNA…DDHR. Residues 986-1016 are compositionally biased toward acidic residues; that stretch reads DNNDDNNDNNDDNNDNNDDNNDNNDNNDDNN. 2 stretches are compositionally biased toward low complexity: residues 1017–1050 and 1551–1572; these read NDNNNNNNNDNNDNNNNNNNNNNNNDNDNNNNNN and NKLCNNDNNNNNNNKGKNTKYN. Polar residues predominate over residues 1714–1732; it reads QGSINNAKHNEQGSINNAK. Residues 2067–2117 form the AWS domain; sequence SDDYKCLCQGECNLYTCYNSLSNIQCSKSRCNLPEKIQDRKCFNRPFRKSF. Residues 2119–2240 enclose the SET domain; the sequence is KDLEIKKTEK…SGEEITYNYS (122 aa). Y2239 is a binding site for S-adenosyl-L-methionine. A PHD-type 2 zinc finger spans residues 2423–2471; sequence DEVCRKCKSCGNLTMCDKCFQSYHQLCGNMHSKMYKNNELVLCRFCQKY.

Belongs to the class V-like SAM-binding methyltransferase superfamily.

The protein resides in the nucleus. The protein localises to the chromosome. It carries out the reaction L-lysyl(36)-[histone H3] + 3 S-adenosyl-L-methionine = N(6),N(6),N(6)-trimethyl-L-lysyl(36)-[histone H3] + 3 S-adenosyl-L-homocysteine + 3 H(+). Functionally, histone methyltransferase that specifically represses expression of the surface antigen-coding var genes by mediating trimethylation of 'Lys-36' of histone H3 (H3K36me3) on var genes. SETVS-dependent H3K36me3 is specifically involved in var genes silencing, a central step malaria pathogenesis: each parasite contains 60 distinct var genes that each code for a different PfEMP1 protein. During infection, the clonal parasite population expresses only 1 gene at a time, while the 59 other var genes are silenced. The parasite then switches to the expression of a new variant antigen as an immune-evasion mechanism to avoid the host antibody response. Represses expression of both var mRNA and antisense long non-coding RNA. This is Variant-silencing SET domain-containing protein (SETVS) from Plasmodium falciparum (isolate 3D7).